The sequence spans 410 residues: Proteasomal ubiquitin receptor ADRM1 (410 aa).

The 114-residue stretch at 17-130 (SSSKYLVEFR…RKVNEYLNNP (114 aa)) folds into the Pru domain. The residue at position 18 (serine 18) is a Phosphoserine. Positions 191-257 (GSGGPATSSS…PAAQTPSLPA (67 aa)) are enriched in low complexity. 2 disordered regions span residues 191–264 (GSGG…SSTQ) and 381–410 (FAKAMEGSDSKTDDGDSKDKKDDDEDMSLD). The 115-residue stretch at 281–395 (PAMPTEGSGV…EGSDSKTDDG (115 aa)) folds into the DEUBAD domain. Residues 381 to 401 (FAKAMEGSDSKTDDGDSKDKK) show a composition bias toward basic and acidic residues.

This sequence belongs to the ADRM1 family. In terms of assembly, component of the 19S proteasome regulatory particle complex. The 26S proteasome consists of a 20S core particle (CP) and two 19S regulatory subunits (RP).

Its subcellular location is the cytoplasm. The protein resides in the nucleus. Component of the 26S proteasome, a multiprotein complex involved in the ATP-dependent degradation of ubiquitinated proteins. This complex plays a key role in the maintenance of protein homeostasis by removing misfolded or damaged proteins, which could impair cellular functions, and by removing proteins whose functions are no longer required. Therefore, the proteasome participates in numerous cellular processes, including cell cycle progression, apoptosis, or DNA damage repair. Within the complex, functions as a proteasomal ubiquitin receptor. The protein is Proteasomal ubiquitin receptor ADRM1 (adrm1b) of Danio rerio (Zebrafish).